Here is a 562-residue protein sequence, read N- to C-terminus: Oxygen-dependent choline dehydrogenase (562 aa).

Residue 4-33 participates in FAD binding; sequence DYIIIGAGSAGNVLATRLTEDPNTTVLLLE. Histidine 473 (proton acceptor) is an active-site residue.

The protein belongs to the GMC oxidoreductase family. FAD is required as a cofactor.

It carries out the reaction choline + A = betaine aldehyde + AH2. The catalysed reaction is betaine aldehyde + NAD(+) + H2O = glycine betaine + NADH + 2 H(+). It participates in amine and polyamine biosynthesis; betaine biosynthesis via choline pathway; betaine aldehyde from choline (cytochrome c reductase route): step 1/1. Functionally, involved in the biosynthesis of the osmoprotectant glycine betaine. Catalyzes the oxidation of choline to betaine aldehyde and betaine aldehyde to glycine betaine at the same rate. This is Oxygen-dependent choline dehydrogenase from Escherichia coli (strain SMS-3-5 / SECEC).